A 313-amino-acid chain; its full sequence is Ribosomal RNA small subunit methyltransferase H (313 aa).

Residues 35–37, aspartate 55, phenylalanine 80, aspartate 102, and glutamine 109 contribute to the S-adenosyl-L-methionine site; that span reads GGH.

Belongs to the methyltransferase superfamily. RsmH family.

It is found in the cytoplasm. It carries out the reaction cytidine(1402) in 16S rRNA + S-adenosyl-L-methionine = N(4)-methylcytidine(1402) in 16S rRNA + S-adenosyl-L-homocysteine + H(+). Its function is as follows. Specifically methylates the N4 position of cytidine in position 1402 (C1402) of 16S rRNA. This is Ribosomal RNA small subunit methyltransferase H from Shewanella loihica (strain ATCC BAA-1088 / PV-4).